The chain runs to 328 residues: D-cysteine desulfhydrase (328 aa).

Residue Lys-51 is modified to N6-(pyridoxal phosphate)lysine.

Belongs to the ACC deaminase/D-cysteine desulfhydrase family. As to quaternary structure, homodimer. It depends on pyridoxal 5'-phosphate as a cofactor.

It catalyses the reaction D-cysteine + H2O = hydrogen sulfide + pyruvate + NH4(+) + H(+). In terms of biological role, catalyzes the alpha,beta-elimination reaction of D-cysteine and of several D-cysteine derivatives. It could be a defense mechanism against D-cysteine. The sequence is that of D-cysteine desulfhydrase from Salmonella schwarzengrund (strain CVM19633).